The chain runs to 99 residues: Aspartyl/glutamyl-tRNA(Asn/Gln) amidotransferase subunit C (99 aa).

Belongs to the GatC family. In terms of assembly, heterotrimer of A, B and C subunits.

The enzyme catalyses L-glutamyl-tRNA(Gln) + L-glutamine + ATP + H2O = L-glutaminyl-tRNA(Gln) + L-glutamate + ADP + phosphate + H(+). It catalyses the reaction L-aspartyl-tRNA(Asn) + L-glutamine + ATP + H2O = L-asparaginyl-tRNA(Asn) + L-glutamate + ADP + phosphate + 2 H(+). Its function is as follows. Allows the formation of correctly charged Asn-tRNA(Asn) or Gln-tRNA(Gln) through the transamidation of misacylated Asp-tRNA(Asn) or Glu-tRNA(Gln) in organisms which lack either or both of asparaginyl-tRNA or glutaminyl-tRNA synthetases. The reaction takes place in the presence of glutamine and ATP through an activated phospho-Asp-tRNA(Asn) or phospho-Glu-tRNA(Gln). This chain is Aspartyl/glutamyl-tRNA(Asn/Gln) amidotransferase subunit C, found in Mycobacterium marinum (strain ATCC BAA-535 / M).